Consider the following 100-residue polypeptide: Large ribosomal subunit protein bL27 (100 aa).

The propeptide occupies 1–13 (MNKLYWLTDLQLF). Over residues 18 to 29 (GVDSSKNGRDSN) the composition is skewed to basic and acidic residues. The segment at 18 to 39 (GVDSSKNGRDSNPKYLGAKLGD) is disordered.

The protein belongs to the bacterial ribosomal protein bL27 family. Post-translationally, the N-terminus is cleaved by ribosomal processing cysteine protease Prp.

The chain is Large ribosomal subunit protein bL27 from Ureaplasma urealyticum serovar 10 (strain ATCC 33699 / Western).